The following is an 892-amino-acid chain: DNA mismatch repair protein MutS (892 aa).

Gly-607–Ser-614 lines the ATP pocket.

The protein belongs to the DNA mismatch repair MutS family.

Its function is as follows. This protein is involved in the repair of mismatches in DNA. It is possible that it carries out the mismatch recognition step. This protein has a weak ATPase activity. In Bacillus cereus (strain G9842), this protein is DNA mismatch repair protein MutS.